A 273-amino-acid polypeptide reads, in one-letter code: Tyrosinase (273 aa).

Residues His-38, His-54, His-63, His-190, His-194, and His-216 each contribute to the Cu cation site.

The protein belongs to the tyrosinase family. Requires Cu(2+) as cofactor.

The enzyme catalyses 2 L-dopa + O2 = 2 L-dopaquinone + 2 H2O. The catalysed reaction is L-tyrosine + O2 = L-dopaquinone + H2O. Functionally, this is a copper-containing oxidase that functions in the formation of pigments such as melanins and other polyphenolic compounds. The polypeptide is Tyrosinase (melC2) (Streptomyces antibioticus).